The following is a 376-amino-acid chain: Queuine tRNA-ribosyltransferase (376 aa).

The active-site Proton acceptor is the D93. Substrate contacts are provided by residues 93-97 (DSGGF), D147, Q190, and G217. An RNA binding region spans residues 248-254 (GVGKPDD). The Nucleophile role is filled by D267. The Zn(2+) site is built by C305, C307, C310, and H336.

This sequence belongs to the queuine tRNA-ribosyltransferase family. Homodimer. Within each dimer, one monomer is responsible for RNA recognition and catalysis, while the other monomer binds to the replacement base PreQ1. It depends on Zn(2+) as a cofactor.

The catalysed reaction is 7-aminomethyl-7-carbaguanine + guanosine(34) in tRNA = 7-aminomethyl-7-carbaguanosine(34) in tRNA + guanine. Its pathway is tRNA modification; tRNA-queuosine biosynthesis. Catalyzes the base-exchange of a guanine (G) residue with the queuine precursor 7-aminomethyl-7-deazaguanine (PreQ1) at position 34 (anticodon wobble position) in tRNAs with GU(N) anticodons (tRNA-Asp, -Asn, -His and -Tyr). Catalysis occurs through a double-displacement mechanism. The nucleophile active site attacks the C1' of nucleotide 34 to detach the guanine base from the RNA, forming a covalent enzyme-RNA intermediate. The proton acceptor active site deprotonates the incoming PreQ1, allowing a nucleophilic attack on the C1' of the ribose to form the product. After dissociation, two additional enzymatic reactions on the tRNA convert PreQ1 to queuine (Q), resulting in the hypermodified nucleoside queuosine (7-(((4,5-cis-dihydroxy-2-cyclopenten-1-yl)amino)methyl)-7-deazaguanosine). The polypeptide is Queuine tRNA-ribosyltransferase (Ruegeria pomeroyi (strain ATCC 700808 / DSM 15171 / DSS-3) (Silicibacter pomeroyi)).